We begin with the raw amino-acid sequence, 292 residues long: 4-amino-L-phenylalanine/4-methylamino-L-phenylalanine methyltransferase (292 aa).

Residue 128–132 participates in S-adenosyl-L-methionine binding; it reads CAGPG.

It belongs to the protein N5-glutamine methyltransferase family.

It catalyses the reaction 4-amino-L-phenylalanine + S-adenosyl-L-methionine = 4-methylamino-L-phenylalanine + S-adenosyl-L-homocysteine + H(+). The enzyme catalyses 4-methylamino-L-phenylalanine + S-adenosyl-L-methionine = 4-dimethylamino-L-phenylalanine + S-adenosyl-L-homocysteine + H(+). Its pathway is antibiotic biosynthesis. Involved in pristinamycin I biosynthesis. Catalyzes the SAM-dependent methylation of 4-amino-L-phenylalanine (PAPA) to 4-methylamino-L-phenylalanine (MMPAPA), and of MMPAPA to 4-dimethylamino-L-phenylalanine (DMPAPA). In Streptomyces pristinaespiralis, this protein is 4-amino-L-phenylalanine/4-methylamino-L-phenylalanine methyltransferase.